A 109-amino-acid chain; its full sequence is MILVALALVALAVAAPPAEEPVQILRSEFNQQPEGSYQFGFETADGISRSETGDVKEALDEENKPHKVVVVRGSYSYTDKEGNPETVNYFADETGYHAEGSSIPKPARK.

The first 14 residues, 1-14 (MILVALALVALAVA), serve as a signal peptide directing secretion. Residues 34–107 (EGSYQFGFET…AEGSSIPKPA (74 aa)) enclose the Chitin-binding type R&amp;R domain.

Its function is as follows. Component of the cuticle of the larva of Helicoverpa armigera. In Helicoverpa armigera (Cotton bollworm), this protein is Larval cuticle protein 1 (LCP1).